A 558-amino-acid chain; its full sequence is uncharacterized protein (558 aa).

In terms of domain architecture, DhaL spans 7–206; it reads SNFIDMLRLG…FACFLEGMLS (200 aa).

This is an uncharacterized protein from Mycoplasma pneumoniae (strain ATCC 29342 / M129 / Subtype 1) (Mycoplasmoides pneumoniae).